We begin with the raw amino-acid sequence, 104 residues long: Large ribosomal subunit protein bL21 (104 aa).

Belongs to the bacterial ribosomal protein bL21 family. As to quaternary structure, part of the 50S ribosomal subunit. Contacts protein L20.

In terms of biological role, this protein binds to 23S rRNA in the presence of protein L20. The polypeptide is Large ribosomal subunit protein bL21 (Helicobacter pylori (strain G27)).